A 414-amino-acid chain; its full sequence is Wilms tumor protein homolog A (414 aa).

Residues K55 and K158 each participate in a glycyl lysine isopeptide (Lys-Gly) (interchain with G-Cter in SUMO) cross-link. The short motif at 217 to 225 (MTWNQMNLG) is the 9aaTAD element. 3 consecutive C2H2-type zinc fingers follow at residues 288–312 (FMCA…SRKH), 318–342 (YQCD…QRRH), and 348–370 (FQCK…TRTH). Important for interaction with target DNA stretches follow at residues 332–346 (SDQL…TGIK) and 358–366 (SRSDHLKTH). The KTS motif motif lies at 373-375 (KTS). A C2H2-type 4 zinc finger spans residues 379-403 (FSCRWPSCQKKFARSDELVRHHNMH).

Belongs to the EGR C2H2-type zinc-finger protein family. In terms of tissue distribution, expressed around the pronephric anlage and in the pronephros; expression is restricted to the splanchnic mesoderm (the site where the glomus forms) from tailbud stages, and the glomus of early tadpoles. Not expressed in the pronephric tubules or pronephric duct. In tadpoles (stage 38-39), additional expression begins in the heart. Also expressed in the adult kidney (mesonephros).

The protein resides in the nucleus. Its subcellular location is the cytoplasm. It is found in the nucleus speckle. Functionally, transcription factor required for development of the vascular component of the pronephric kidney, the glomus; may repress tubule-specific gene expression in the portion of the pronephros fated to form the glomus. Recognizes and binds to the DNA sequence 5'-GCG(T/G)GGGCG-3'. Inhibits Wnt-signaling during embryonic development. Function may be isoform-specific: the isoform containing the KTS motif is less effective in inhibiting wnt signaling. The polypeptide is Wilms tumor protein homolog A (wt1-a) (Xenopus laevis (African clawed frog)).